Consider the following 612-residue polypeptide: Cyclin-dependent kinase G1 (612 aa).

Residues 26-54 (SRDVYVRQSGRDDERRQIKRPSDHDLRRN) are compositionally biased toward basic and acidic residues. Disordered stretches follow at residues 26 to 60 (SRDV…RHRS) and 239 to 278 (CYSS…EDQD). In terms of domain architecture, Protein kinase spans 297–593 (FQKLNKINEG…VEDALNHGWF (297 aa)). ATP is bound by residues 303-311 (INEGTYGIV) and Lys326. A Phosphotyrosine modification is found at Tyr308. Residue Asp426 is the Proton acceptor of the active site. Residue Ser453 is modified to Phosphoserine. Thr459 carries the phosphothreonine modification.

Belongs to the protein kinase superfamily. Ser/Thr protein kinase family. Forms a complex with CYCL1-1. Associated with the spliceosome. Interacts with RS2Z33. Expressed in leaves and inflorescences. Lower levels of expression in roots and stems.

The protein resides in the nucleus speckle. The enzyme catalyses L-seryl-[protein] + ATP = O-phospho-L-seryl-[protein] + ADP + H(+). It catalyses the reaction L-threonyl-[protein] + ATP = O-phospho-L-threonyl-[protein] + ADP + H(+). Functionally, cyclin-dependent kinase involved in pre-mRNA splicing. Required for the correct splicing of the sixth intron of CALS5 pre-mRNA. May stabilize the binding of U1 snRNP to this rare type of intron with a GC 5'SS. Involved in chromosome pairing and is required for the completion of synapsis in male meiocytes at high ambient temperatures. The protein is Cyclin-dependent kinase G1 (CDKG1) of Arabidopsis thaliana (Mouse-ear cress).